We begin with the raw amino-acid sequence, 294 residues long: Phosphoribosylaminoimidazole-succinocarboxamide synthase (294 aa).

It belongs to the SAICAR synthetase family.

The catalysed reaction is 5-amino-1-(5-phospho-D-ribosyl)imidazole-4-carboxylate + L-aspartate + ATP = (2S)-2-[5-amino-1-(5-phospho-beta-D-ribosyl)imidazole-4-carboxamido]succinate + ADP + phosphate + 2 H(+). The protein operates within purine metabolism; IMP biosynthesis via de novo pathway; 5-amino-1-(5-phospho-D-ribosyl)imidazole-4-carboxamide from 5-amino-1-(5-phospho-D-ribosyl)imidazole-4-carboxylate: step 1/2. The protein is Phosphoribosylaminoimidazole-succinocarboxamide synthase of Rhodococcus opacus (strain B4).